The chain runs to 103 residues: Large ribosomal subunit protein bL21 (103 aa).

This sequence belongs to the bacterial ribosomal protein bL21 family. Part of the 50S ribosomal subunit. Contacts protein L20.

In terms of biological role, this protein binds to 23S rRNA in the presence of protein L20. This Mycobacterium marinum (strain ATCC BAA-535 / M) protein is Large ribosomal subunit protein bL21.